The chain runs to 283 residues: GTPase Era (283 aa).

One can recognise an Era-type G domain in the interval 7–175 (YCGHVIIVGK…KNIIKSYLPE (169 aa)). The tract at residues 15–22 (GKANVGKS) is G1. Residue 15 to 22 (GKANVGKS) participates in GTP binding. Residues 41 to 45 (NTTQS) form a G2 region. Positions 62-65 (DTPG) are G3. GTP contacts are provided by residues 62–66 (DTPGV) and 124–127 (NKID). A G4 region spans residues 124-127 (NKID). The interval 154–156 (ISA) is G5. Positions 198 to 283 (IREQLILFLG…HLVLWVKDKN (86 aa)) constitute a KH type-2 domain.

This sequence belongs to the TRAFAC class TrmE-Era-EngA-EngB-Septin-like GTPase superfamily. Era GTPase family. In terms of assembly, monomer.

It is found in the cytoplasm. It localises to the cell membrane. Functionally, an essential GTPase that binds both GDP and GTP, with rapid nucleotide exchange. Plays a role in 16S rRNA processing and 30S ribosomal subunit biogenesis and possibly also in cell cycle regulation and energy metabolism. In Buchnera aphidicola subsp. Acyrthosiphon pisum (strain APS) (Acyrthosiphon pisum symbiotic bacterium), this protein is GTPase Era.